Reading from the N-terminus, the 211-residue chain is SAGA-associated factor 11 homolog 2 (211 aa).

The SGF11-type zinc-finger motif lies at Cys115–Cys136. The segment at Arg149 to Phe211 is disordered. Residues Ser157 to Thr166 are compositionally biased toward low complexity. Ser187 carries the phosphoserine modification. Over residues Ser197–Phe211 the composition is skewed to low complexity.

The protein belongs to the SGF11 family. In terms of assembly, component of some SAGA transcription coactivator-HAT complexes, at least composed of Ada2b, not/nonstop, Pcaf/Gcn5, Sgf11 and Spt3. Within the SAGA complex, Sgf11, e(y)2, and not/nonstop form an additional subcomplex of SAGA called the DUB module (deubiquitination module). Interacts directly with not/nonstop. Interacts with the AMEX complex component xmas-2. Interacts with Cbp80; important for promoter recruitment of Sgf11 that is not associated with the DUB module.

The protein localises to the nucleus. Its subcellular location is the nucleoplasm. It is found in the cytoplasm. Its function is as follows. Component of the transcription regulatory histone acetylation (HAT) complex SAGA, a multiprotein complex that activates transcription by remodeling chromatin and mediating histone acetylation and deubiquitination. Within the SAGA complex, participates in a subcomplex that specifically deubiquitinates histone H2B. The SAGA complex is recruited to specific gene promoters by activators, where it is required for transcription. Required for nuclear receptor-mediated transactivation. Binds independently on SAGA to promoters in an RNA-dependent manner. Binds to mRNA and is essential for total mRNA export from the nucleus. Required to counteract heterochromatin silencing. Controls the development of neuronal connectivity in visual system by being required for accurate axon targeting in the optic lobe. Required for expression of ecdysone-induced genes such as br/broad. The sequence is that of SAGA-associated factor 11 homolog 2 from Drosophila grimshawi (Hawaiian fruit fly).